The chain runs to 502 residues: Uric acid degradation bifunctional protein (502 aa).

The interval 1 to 178 is OHCU decarboxylase; the sequence is MMRLKQLNEM…NSMTKHKERV (178 aa). Residue H68 is the Proton donor; for OHCU decarboxylase activity of the active site. Residues P69, 81 to 85, and 116 to 120 contribute to the 5-hydroxy-2-oxo-4-ureido-2,5-dihydro-1H-imidazole-5-carboxylate site; these read SQEEQ and FVMAV. Residues 179-502 form a urate oxidase region; sequence MYYGKGDVFA…DEPDHKGALK (324 aa). The active-site Charge relay system; for urate oxidase activity is the K183. K194 acts as the Charge relay system in catalysis. The active-site Charge relay system; for urate oxidase activity is T243. Residues T243, D244, F354, R371, I419, Q420, and N446 each contribute to the urate site.

The protein in the N-terminal section; belongs to the OHCU decarboxylase family. This sequence in the C-terminal section; belongs to the uricase family.

The enzyme catalyses 5-hydroxy-2-oxo-4-ureido-2,5-dihydro-1H-imidazole-5-carboxylate + H(+) = (S)-allantoin + CO2. It catalyses the reaction urate + O2 + H2O = 5-hydroxyisourate + H2O2. It participates in purine metabolism; urate degradation; (S)-allantoin from urate: step 1/3. The protein operates within purine metabolism; urate degradation; (S)-allantoin from urate: step 3/3. Its function is as follows. Catalyzes two steps in the degradation of uric acid, i.e. the oxidation of uric acid to 5-hydroxyisourate (HIU) and the stereoselective decarboxylation of 2-oxo-4-hydroxy-4-carboxy-5-ureidoimidazoline (OHCU) to (S)-allantoin. This chain is Uric acid degradation bifunctional protein (uao), found in Bacillus sp. (strain TB-90).